A 384-amino-acid chain; its full sequence is Tryptophan--tRNA ligase (384 aa).

The short motif at 81-89 (PSGPMHIGH) is the 'HIGH' region element. A 'KMSKS' region motif is present at residues 252–256 (KMSAS).

This sequence belongs to the class-I aminoacyl-tRNA synthetase family.

Its subcellular location is the cytoplasm. The catalysed reaction is tRNA(Trp) + L-tryptophan + ATP = L-tryptophyl-tRNA(Trp) + AMP + diphosphate + H(+). The polypeptide is Tryptophan--tRNA ligase (Thermococcus onnurineus (strain NA1)).